Consider the following 344-residue polypeptide: MTNMMKALVKAKPEEGLWMERVPLPEIGPNDVLIKVRKAAICGTDVHIWNWDEWARKTVPVPLVTGHEFVGEVVDVGSAVTEYRIGQRVSGEGHIVCGHCRNCRAGRGHLCRNTLGVGVHRPGAFAEYISLPQHNVVAIPDDVPDEIAAIFDPLGNAVHTALSFDLVGEDVLVTGAGPIGIMGALVAQCVGARKVVITDINPGRLALAKKLGVRHVVNAREEKLTDVMRKLGMTEGFDVGLEMSGSASAFRDMIDVMNNGGKIAILGIAPTGFEIDWNKVIFKMLHLKGIYGREMFETWYKMIALVQGPLDISGLITHRISADDYREGFAAMRSGEAGKVVMDW.

C42 is a binding site for Zn(2+). Residues T44 and H47 each act as charge relay system in the active site. Zn(2+)-binding residues include H67, E68, C97, C100, C103, and C111. Residues I179, D199, R204, 266–268 (LGI), and 290–291 (IY) each bind NAD(+).

It belongs to the zinc-containing alcohol dehydrogenase family. Homotetramer. Zn(2+) is required as a cofactor.

Its subcellular location is the cytoplasm. It catalyses the reaction L-threonine + NAD(+) = (2S)-2-amino-3-oxobutanoate + NADH + H(+). Its pathway is amino-acid degradation; L-threonine degradation via oxydo-reductase pathway; glycine from L-threonine: step 1/2. Catalyzes the NAD(+)-dependent oxidation of L-threonine to 2-amino-3-ketobutyrate. The sequence is that of L-threonine 3-dehydrogenase from Chelativorans sp. (strain BNC1).